Reading from the N-terminus, the 238-residue chain is Ribose-5-phosphate isomerase A (238 aa).

Residues 30-33 (SGST), 87-90 (DGAD), and 100-103 (KGGG) each bind substrate. Catalysis depends on glutamate 109, which acts as the Proton acceptor. Residue lysine 127 participates in substrate binding.

This sequence belongs to the ribose 5-phosphate isomerase family. Homodimer.

It carries out the reaction aldehydo-D-ribose 5-phosphate = D-ribulose 5-phosphate. The protein operates within carbohydrate degradation; pentose phosphate pathway; D-ribose 5-phosphate from D-ribulose 5-phosphate (non-oxidative stage): step 1/1. Its function is as follows. Catalyzes the reversible conversion of ribose-5-phosphate to ribulose 5-phosphate. The chain is Ribose-5-phosphate isomerase A from Synechococcus sp. (strain CC9311).